The following is a 250-amino-acid chain: 5'-nucleotidase SurE (250 aa).

Residues Asp-9, Asp-10, Ser-40, and Asn-92 each contribute to the a divalent metal cation site.

This sequence belongs to the SurE nucleotidase family. A divalent metal cation is required as a cofactor.

It is found in the cytoplasm. The catalysed reaction is a ribonucleoside 5'-phosphate + H2O = a ribonucleoside + phosphate. Its function is as follows. Nucleotidase that shows phosphatase activity on nucleoside 5'-monophosphates. The chain is 5'-nucleotidase SurE from Idiomarina loihiensis (strain ATCC BAA-735 / DSM 15497 / L2-TR).